The sequence spans 327 residues: Probable 6-phosphogluconolactonase 3, chloroplastic (327 aa).

Low complexity-rich tracts occupy residues 1–29 (MSAS…PASR) and 43–66 (VASR…PGGA). Residues 1 to 66 (MSASAAVSST…VYATASPGGA (66 aa)) are disordered. The N-terminal 71 residues, 1-71 (MSASAAVSST…SPGGAGGTTA (71 aa)), are a transit peptide targeting the chloroplast.

Belongs to the glucosamine/galactosamine-6-phosphate isomerase family. 6-phosphogluconolactonase subfamily.

Its subcellular location is the plastid. It localises to the chloroplast. The enzyme catalyses 6-phospho-D-glucono-1,5-lactone + H2O = 6-phospho-D-gluconate + H(+). The protein operates within carbohydrate degradation; pentose phosphate pathway; D-ribulose 5-phosphate from D-glucose 6-phosphate (oxidative stage): step 2/3. Hydrolysis of 6-phosphogluconolactone to 6-phosphogluconate. The polypeptide is Probable 6-phosphogluconolactonase 3, chloroplastic (Oryza sativa subsp. indica (Rice)).